Consider the following 145-residue polypeptide: Ribonuclease H (145 aa).

The 141-residue stretch at 1-141 (MQEVIIYSDG…ADALANRGVA (141 aa)) folds into the RNase H type-1 domain. Residues D9, E47, D69, and D133 each contribute to the Mg(2+) site.

It belongs to the RNase H family. In terms of assembly, monomer. The cofactor is Mg(2+).

The protein localises to the cytoplasm. It carries out the reaction Endonucleolytic cleavage to 5'-phosphomonoester.. Functionally, endonuclease that specifically degrades the RNA of RNA-DNA hybrids. The sequence is that of Ribonuclease H from Cupriavidus pinatubonensis (strain JMP 134 / LMG 1197) (Cupriavidus necator (strain JMP 134)).